The following is a 263-amino-acid chain: Bradykinin-potentiating and C-type natriuretic peptides (263 aa).

Positions 1–23 (MFVSRLAASGLLLLALMALSLDG) are cleaved as a signal peptide. The propeptide occupies 24-30 (KPVQQWS). The residue at position 31 (Gln-31) is a Pyrrolidone carboxylic acid. A propeptide spanning residues 42–48 (LVVQQWS) is cleaved from the precursor. Position 49 is a pyrrolidone carboxylic acid (Gln-49). Positions 60-66 (LVVQQWS) are excised as a propeptide. A Pyrrolidone carboxylic acid modification is found at Gln-67. A propeptide spanning residues 78-84 (LVVQQWS) is cleaved from the precursor. Gln-85 is modified (pyrrolidone carboxylic acid). An angiotensin-converting enzyme active site binding region spans residues 89–95 (PRPKIPP). Residues 96–102 (LVVQQWS) constitute a propeptide that is removed on maturation. Gln-103 is modified (pyrrolidone carboxylic acid). Positions 107–113 (PRPKIPP) are angiotensin-converting enzyme active site binding. A propeptide spanning residues 114–116 (LVV) is cleaved from the precursor. Position 117 is a pyrrolidone carboxylic acid (Gln-117). Positions 128 to 130 (LLL) are excised as a propeptide. Gln-131 bears the Pyrrolidone carboxylic acid mark. A propeptide spanning residues 137-241 (AGGTTALREE…ARRLKGLVKK (105 aa)) is cleaved from the precursor. 2 disordered regions span residues 152-171 (EAAS…GSKA) and 177-205 (RLSK…GKQA). Residues 181–192 (SKGASATSASAS) are compositionally biased toward low complexity. The segment covering 194 to 204 (PMRDLRTDGKQ) has biased composition (basic and acidic residues). Cys-247 and Cys-263 form a disulfide bridge.

It in the N-terminal section; belongs to the bradykinin-potentiating peptide family. The protein in the C-terminal section; belongs to the natriuretic peptide family. Expressed by the venom gland.

It is found in the secreted. Functionally, inhibits the rabbit lung angiotensin-converting enzyme (ACE) (IC(50)=15 uM). Contracts the rat gastric fundus smooth muscle in a rapid and transient manner. Its function is as follows. Causes no contraction of the rat gastric fundus smooth muscle even at high concentrations. Causes very weak contraction of the isolated guinea pig ileum. Causes weak contraction on rat uterus. In terms of biological role, inhibits the activity of the angiotensin-converting enzyme (ACE) by a preferential interaction with its C-domain (Ki=30 nM, IC(50)=1.1 uM). It binds ACE in a zinc-independent manner. Also potentiates the hypotensive effects of bradykinin. Causes high contraction of the isolated guinea pig ileum and weak contraction on rat uterus. Inhibits the activity of the angiotensin-converting enzyme (ACE) by interacting with the same potency to its C- and N-domains. Inhibits the rabbit lung angiotensin-converting enzyme (ACE) (IC(50)=7.1 uM). Causes weak contraction of the isolated guinea pig ileum. Causes weak contraction on rat uterus. Functionally, inhibits the rabbit lung angiotensin-converting enzyme (ACE) (IC(50)=46 uM). Synthetic Leu3-blomhotin contracts the rat gastric fundus smooth muscle in a rapid and transient manner. Causes moderate contraction of the isolated guinea pig ileum. Causes weak contraction on rat uterus. Its function is as follows. Causes weak contraction of the isolated guinea pig ileum. Causes about 50-fold more potentiating activity on rat uterus than on guinea pig ileum. In terms of biological role, synthetic peptide potentiates the bradykinin in vivo. Synthetic peptide does not show any bradykinin-potentiating effects. Functionally, has a vasorelaxant activity in rat aortic strips and a diuretic potency in anesthetized rats. May act by activating natriuretic receptors (NPR1 and/or NPR2). This chain is Bradykinin-potentiating and C-type natriuretic peptides, found in Gloydius blomhoffii (Mamushi).